The chain runs to 469 residues: Glutamate--tRNA ligase (469 aa).

A 'HIGH' region motif is present at residues 11 to 21 (PSPTGFIHLGN). Residues 243–247 (KMSKR) carry the 'KMSKS' region motif. Lys-246 contributes to the ATP binding site.

This sequence belongs to the class-I aminoacyl-tRNA synthetase family. Glutamate--tRNA ligase type 1 subfamily. As to quaternary structure, monomer.

The protein resides in the cytoplasm. It catalyses the reaction tRNA(Glu) + L-glutamate + ATP = L-glutamyl-tRNA(Glu) + AMP + diphosphate. Its function is as follows. Catalyzes the attachment of glutamate to tRNA(Glu) in a two-step reaction: glutamate is first activated by ATP to form Glu-AMP and then transferred to the acceptor end of tRNA(Glu). In Burkholderia cenocepacia (strain HI2424), this protein is Glutamate--tRNA ligase.